A 382-amino-acid polypeptide reads, in one-letter code: F-box/kelch-repeat protein At3g16580 (382 aa).

Residues tryptophan 9–histidine 55 enclose the F-box domain. 2 Kelch repeats span residues lysine 150 to threonine 196 and tryptophan 334 to glutamine 381.

The sequence is that of F-box/kelch-repeat protein At3g16580 from Arabidopsis thaliana (Mouse-ear cress).